The following is a 56-amino-acid chain: Large ribosomal subunit protein bL32 (56 aa).

The segment covering 1–16 (MAVQKNRKTRSKRGMR) has biased composition (basic residues). Residues 1-28 (MAVQKNRKTRSKRGMRRSHDALTTAALS) are disordered.

Belongs to the bacterial ribosomal protein bL32 family.

This is Large ribosomal subunit protein bL32 from Vibrio campbellii (strain ATCC BAA-1116).